Reading from the N-terminus, the 122-residue chain is Large ribosomal subunit protein uL14 (122 aa).

Belongs to the universal ribosomal protein uL14 family. As to quaternary structure, part of the 50S ribosomal subunit. Forms a cluster with proteins L3 and L19. In the 70S ribosome, L14 and L19 interact and together make contacts with the 16S rRNA in bridges B5 and B8.

Its function is as follows. Binds to 23S rRNA. Forms part of two intersubunit bridges in the 70S ribosome. The protein is Large ribosomal subunit protein uL14 of Rhodospirillum rubrum (strain ATCC 11170 / ATH 1.1.1 / DSM 467 / LMG 4362 / NCIMB 8255 / S1).